Here is a 232-residue protein sequence, read N- to C-terminus: 5'-methylthioadenosine/S-adenosylhomocysteine nucleosidase (232 aa).

Glu-12 serves as the catalytic Proton acceptor. Substrate is bound by residues Gly-78, Ile-152, and 173 to 174 (ME). Residue Asp-197 is the Proton donor of the active site.

It belongs to the PNP/UDP phosphorylase family. MtnN subfamily. In terms of assembly, homodimer.

It carries out the reaction S-adenosyl-L-homocysteine + H2O = S-(5-deoxy-D-ribos-5-yl)-L-homocysteine + adenine. It catalyses the reaction S-methyl-5'-thioadenosine + H2O = 5-(methylsulfanyl)-D-ribose + adenine. The enzyme catalyses 5'-deoxyadenosine + H2O = 5-deoxy-D-ribose + adenine. It participates in amino-acid biosynthesis; L-methionine biosynthesis via salvage pathway; S-methyl-5-thio-alpha-D-ribose 1-phosphate from S-methyl-5'-thioadenosine (hydrolase route): step 1/2. In terms of biological role, catalyzes the irreversible cleavage of the glycosidic bond in both 5'-methylthioadenosine (MTA) and S-adenosylhomocysteine (SAH/AdoHcy) to adenine and the corresponding thioribose, 5'-methylthioribose and S-ribosylhomocysteine, respectively. Also cleaves 5'-deoxyadenosine, a toxic by-product of radical S-adenosylmethionine (SAM) enzymes, into 5-deoxyribose and adenine. Thus, is required for in vivo function of the radical SAM enzymes biotin synthase and lipoic acid synthase, that are inhibited by 5'-deoxyadenosine accumulation. The protein is 5'-methylthioadenosine/S-adenosylhomocysteine nucleosidase of Escherichia coli O9:H4 (strain HS).